The sequence spans 307 residues: Homoserine kinase (307 aa).

91-101 contacts ATP; that stretch reads PLARGLGSSAA.

This sequence belongs to the GHMP kinase family. Homoserine kinase subfamily.

The protein resides in the cytoplasm. It carries out the reaction L-homoserine + ATP = O-phospho-L-homoserine + ADP + H(+). The protein operates within amino-acid biosynthesis; L-threonine biosynthesis; L-threonine from L-aspartate: step 4/5. Catalyzes the ATP-dependent phosphorylation of L-homoserine to L-homoserine phosphate. The chain is Homoserine kinase from Deinococcus radiodurans (strain ATCC 13939 / DSM 20539 / JCM 16871 / CCUG 27074 / LMG 4051 / NBRC 15346 / NCIMB 9279 / VKM B-1422 / R1).